Consider the following 136-residue polypeptide: Transcription antitermination protein NusB (136 aa).

It belongs to the NusB family.

Involved in transcription antitermination. Required for transcription of ribosomal RNA (rRNA) genes. Binds specifically to the boxA antiterminator sequence of the ribosomal RNA (rrn) operons. This Kineococcus radiotolerans (strain ATCC BAA-149 / DSM 14245 / SRS30216) protein is Transcription antitermination protein NusB.